The following is a 540-amino-acid chain: Probable G-protein coupled receptor 75 (540 aa).

The span at 1-15 (MNSTGHLQDAPNATS) shows a compositional bias: polar residues. Residues 1–27 (MNSTGHLQDAPNATSLHVPHSQEGNST) are disordered. Topologically, residues 1–46 (MNSTGHLQDAPNATSLHVPHSQEGNSTSLQEGLQDLIHTATLVTCT) are extracellular. N-linked (GlcNAc...) asparagine glycans are attached at residues Asn-2, Asn-12, and Asn-25. A helical membrane pass occupies residues 47-67 (FLLAVIFCLGSYGNFIVFLSF). Residues 68–86 (FDPAFRKFRTNFDFMILNL) are Cytoplasmic-facing. Residues 87 to 107 (SFCDLFICGVTAPMFTFVLFF) form a helical membrane-spanning segment. The Extracellular segment spans residues 108-120 (SSASSIPDAFCFT). Residues 121-141 (FHLTSSGFIIMSLKTVAVIAL) form a helical membrane-spanning segment. The Cytoplasmic segment spans residues 142–160 (HRLRMVLGKQPNRTASFPC). The helical transmembrane segment at 161–181 (TVLLTLLLWATSFTLATLATL) threads the bilayer. At 182–205 (KTSKSHLCLPMSSLIAGKGKAILS) the chain is on the extracellular side. Residues 206 to 226 (LYVVDFTFCVAVVSVSYIMIA) form a helical membrane-spanning segment. At 227–318 (QTLRKNAQVR…INLSTAKDSK (92 aa)) the chain is on the cytoplasmic side. The helical transmembrane segment at 319–339 (AVVTCVIIVLSVLVCCLPLGI) threads the bilayer. Topologically, residues 340-350 (SLVQVVLSSNG) are extracellular. Residues 351-371 (SFILYQFELFGFTLIFFKSGL) form a helical membrane-spanning segment. Residues 372 to 540 (NPFIYSRNSA…SAKQIPVPSV (169 aa)) are Cytoplasmic-facing.

Belongs to the G-protein coupled receptor 1 family. Expressed at high levels in brain and spinal cord and at detectable levels in retinal pigment epithelium. In situ hybridization of adult eye sections localized transcripts only to the perivascular cells, surrounding retinal arterioles, in the ganglion cell/nerve fiber layer. Also expressed by islet cells (at protein level).

Its subcellular location is the cell membrane. In terms of biological role, g protein-coupled receptor that is activated by the chemokine CCL5/RANTES. Probably coupled to heterotrimeric Gq proteins, it stimulates inositol trisphosphate production and calcium mobilization upon activation. Together with CCL5/RANTES, may play a role in neuron survival through activation of a downstream signaling pathway involving the PI3, Akt and MAP kinases. CCL5/RANTES may also regulate insulin secretion by pancreatic islet cells through activation of this receptor. The protein is Probable G-protein coupled receptor 75 (GPR75) of Homo sapiens (Human).